A 535-amino-acid polypeptide reads, in one-letter code: Keratin, type II cytoskeletal 79 (535 aa).

A compositionally biased stretch (polar residues) spans methionine 1 to threonine 12. The tract at residues methionine 1–proline 52 is disordered. The interval methionine 1–glutamine 141 is head. Low complexity predominate over residues serine 32–serine 42. The span at glycine 43–proline 52 shows a compositional bias: gly residues. The interval glutamate 142–leucine 177 is coil 1A. An IF rod domain is found at glutamate 142–methionine 457. The interval glutamine 178–tyrosine 198 is linker 1. The tract at residues leucine 199–valine 290 is coil 1B. The tract at residues glutamine 291 to isoleucine 314 is linker 12. A coil 2 region spans residues isoleucine 315–glutamate 453. Positions glutamate 454 to tyrosine 535 are tail.

The protein belongs to the intermediate filament family. In terms of assembly, heterotetramer of two type I and two type II keratins. In terms of tissue distribution, expressed in skeletal muscle, skin and scalp, but not in any other tissues or organs examined.

This Homo sapiens (Human) protein is Keratin, type II cytoskeletal 79 (KRT79).